The primary structure comprises 212 residues: Thymidylate kinase (212 aa).

10 to 17 (GLEGAGKS) serves as a coordination point for ATP.

It belongs to the thymidylate kinase family.

It carries out the reaction dTMP + ATP = dTDP + ADP. Its function is as follows. Phosphorylation of dTMP to form dTDP in both de novo and salvage pathways of dTTP synthesis. This is Thymidylate kinase from Vibrio cholerae serotype O1 (strain ATCC 39541 / Classical Ogawa 395 / O395).